The following is a 383-amino-acid chain: ATP phosphoribosyltransferase regulatory subunit (383 aa).

This sequence belongs to the class-II aminoacyl-tRNA synthetase family. HisZ subfamily. Heteromultimer composed of HisG and HisZ subunits.

The protein localises to the cytoplasm. It functions in the pathway amino-acid biosynthesis; L-histidine biosynthesis; L-histidine from 5-phospho-alpha-D-ribose 1-diphosphate: step 1/9. Required for the first step of histidine biosynthesis. May allow the feedback regulation of ATP phosphoribosyltransferase activity by histidine. The sequence is that of ATP phosphoribosyltransferase regulatory subunit from Lactiplantibacillus plantarum (strain ATCC BAA-793 / NCIMB 8826 / WCFS1) (Lactobacillus plantarum).